Here is a 266-residue protein sequence, read N- to C-terminus: Uracil-DNA glycosylase (266 aa).

The segment at 1 to 25 (MTRRADPAQATLFDDDEPAGAPTAT) is disordered. Asp97 acts as the Proton acceptor in catalysis.

This sequence belongs to the uracil-DNA glycosylase (UDG) superfamily. UNG family.

It is found in the cytoplasm. It carries out the reaction Hydrolyzes single-stranded DNA or mismatched double-stranded DNA and polynucleotides, releasing free uracil.. Excises uracil residues from the DNA which can arise as a result of misincorporation of dUMP residues by DNA polymerase or due to deamination of cytosine. The chain is Uracil-DNA glycosylase from Ralstonia nicotianae (strain ATCC BAA-1114 / GMI1000) (Ralstonia solanacearum).